A 406-amino-acid polypeptide reads, in one-letter code: UPF0761 membrane protein NMB0524 (406 aa).

6 helical membrane passes run 43 to 63 (LLALVPVLTVMVAVASIFPVF), 100 to 120 (LTAIGSVMLVVTSLMLIRTID), 139 to 159 (FLVYWALLTFGPLSLGVGISF), 176 to 196 (WSGALRTAATLTFMTLLLWGL), 210 to 230 (AFVGALATAFCLETARSLFTW), and 248 to 268 (VPFFLLWLNLLWTLVLGGAVL).

The protein belongs to the UPF0761 family.

Its subcellular location is the cell inner membrane. This Neisseria meningitidis serogroup B (strain ATCC BAA-335 / MC58) protein is UPF0761 membrane protein NMB0524.